Here is a 583-residue protein sequence, read N- to C-terminus: Protein FMP25, mitochondrial (583 aa).

The transit peptide at 1-25 (MSFRLFTRTSQRLPRLNWVSPIRRY) directs the protein to the mitochondrion. The helical transmembrane segment at 83-105 (AVGQGILILVVVGGLGTAYLRWP) threads the bilayer. RCC1 repeat units lie at residues 332 to 389 (KGQF…AIDK), 390 to 452 (TGEI…VTIR), 459 to 510 (DHHY…TETE), and 512 to 569 (ENEV…KEQR).

It is found in the mitochondrion membrane. The polypeptide is Protein FMP25, mitochondrial (FMP25) (Saccharomyces cerevisiae (strain ATCC 204508 / S288c) (Baker's yeast)).